Consider the following 380-residue polypeptide: Beta sliding clamp (380 aa).

It belongs to the beta sliding clamp family. Forms a ring-shaped head-to-tail homodimer around DNA which binds and tethers DNA polymerases and other proteins to the DNA. The DNA replisome complex has a single clamp-loading complex (3 tau and 1 each of delta, delta', psi and chi subunits) which binds 3 Pol III cores (1 core on the leading strand and 2 on the lagging strand) each with a beta sliding clamp dimer. Additional proteins in the replisome are other copies of gamma, psi and chi, Ssb, DNA helicase and RNA primase.

It is found in the cytoplasm. In terms of biological role, confers DNA tethering and processivity to DNA polymerases and other proteins. Acts as a clamp, forming a ring around DNA (a reaction catalyzed by the clamp-loading complex) which diffuses in an ATP-independent manner freely and bidirectionally along dsDNA. Initially characterized for its ability to contact the catalytic subunit of DNA polymerase III (Pol III), a complex, multichain enzyme responsible for most of the replicative synthesis in bacteria; Pol III exhibits 3'-5' exonuclease proofreading activity. The beta chain is required for initiation of replication as well as for processivity of DNA replication. This Lactococcus lactis subsp. lactis (strain IL1403) (Streptococcus lactis) protein is Beta sliding clamp (dnaN).